The primary structure comprises 200 residues: NADH-quinone oxidoreductase subunit C (200 aa).

This sequence belongs to the complex I 30 kDa subunit family. In terms of assembly, NDH-1 is composed of 14 different subunits. Subunits NuoB, C, D, E, F, and G constitute the peripheral sector of the complex.

The protein resides in the cell inner membrane. The catalysed reaction is a quinone + NADH + 5 H(+)(in) = a quinol + NAD(+) + 4 H(+)(out). NDH-1 shuttles electrons from NADH, via FMN and iron-sulfur (Fe-S) centers, to quinones in the respiratory chain. The immediate electron acceptor for the enzyme in this species is believed to be ubiquinone. Couples the redox reaction to proton translocation (for every two electrons transferred, four hydrogen ions are translocated across the cytoplasmic membrane), and thus conserves the redox energy in a proton gradient. The chain is NADH-quinone oxidoreductase subunit C from Paraburkholderia xenovorans (strain LB400).